The chain runs to 45 residues: Phospholipase A2 3 (45 aa).

The Ca(2+) site is built by Tyr-20, Gly-24, and Gly-25. Cysteines 21 and 36 form a disulfide. His-39 is an active-site residue. A Ca(2+)-binding site is contributed by Asp-40.

It depends on Ca(2+) as a cofactor. As to expression, expressed by the venom gland.

It is found in the secreted. The enzyme catalyses a 1,2-diacyl-sn-glycero-3-phosphocholine + H2O = a 1-acyl-sn-glycero-3-phosphocholine + a fatty acid + H(+). Its function is as follows. PLA2 catalyzes the calcium-dependent hydrolysis of the 2-acyl groups in 3-sn-phosphoglycerides. This Bothrops diporus (Chaco lancehead) protein is Phospholipase A2 3.